Consider the following 64-residue polypeptide: MPKIIEAIYENGVFKPLQKVDLKEGERVRIKLEKVEEVVDEVFGILKGKDTLKALRELEEWGFC.

This sequence belongs to the UPF0165 family.

Its function is as follows. Possibly the antitoxin component of a type II toxin-antitoxin (TA) system. The polypeptide is Putative antitoxin AF_1074 (Archaeoglobus fulgidus (strain ATCC 49558 / DSM 4304 / JCM 9628 / NBRC 100126 / VC-16)).